The primary structure comprises 860 residues: Glucans biosynthesis glucosyltransferase H (860 aa).

6 consecutive transmembrane segments (helical) span residues 146–166, 200–220, 519–539, 576–596, 610–630, and 686–706; these read ILLILMLGQTIVAGWYMKGIL, ILLLFGILFCWVSAGFWTALM, VFLTGVMSYLSAPLWFFFLVL, LFSTTIVLLFLPKLLSVILIW, TVSMLLEMLFSVLLAPVRMLF, and FLWWLAPIVVSLMLSIPVSVI.

This sequence belongs to the glycosyltransferase 2 family. OpgH subfamily.

It localises to the cell inner membrane. It functions in the pathway glycan metabolism; osmoregulated periplasmic glucan (OPG) biosynthesis. In terms of biological role, involved in the biosynthesis of osmoregulated periplasmic glucans (OPGs). This is Glucans biosynthesis glucosyltransferase H from Pseudomonas savastanoi pv. phaseolicola (strain 1448A / Race 6) (Pseudomonas syringae pv. phaseolicola (strain 1448A / Race 6)).